We begin with the raw amino-acid sequence, 469 residues long: Glutamate--tRNA ligase (469 aa).

The short motif at 11 to 21 (PSPTGFIHLGN) is the 'HIGH' region element. The 'KMSKS' region motif lies at 243 to 247 (KMSKR). Lysine 246 is an ATP binding site.

This sequence belongs to the class-I aminoacyl-tRNA synthetase family. Glutamate--tRNA ligase type 1 subfamily. In terms of assembly, monomer.

The protein localises to the cytoplasm. It carries out the reaction tRNA(Glu) + L-glutamate + ATP = L-glutamyl-tRNA(Glu) + AMP + diphosphate. Functionally, catalyzes the attachment of glutamate to tRNA(Glu) in a two-step reaction: glutamate is first activated by ATP to form Glu-AMP and then transferred to the acceptor end of tRNA(Glu). The sequence is that of Glutamate--tRNA ligase from Burkholderia cenocepacia (strain HI2424).